Reading from the N-terminus, the 65-residue chain is VESP-VB2 (65 aa).

An N-terminal signal peptide occupies residues 1 to 23; that stretch reads MKMSILFLFALIASLACLQLTFA. AXPX repeat units follow at residues 23–26, 27–30, 31–34, 35–38, 39–42, 43–46, and 47–50; these read AAPA, ASPF, ANPG, ASPE, AAPL, ADPL, and ADPF. Residues 24 to 49 constitute a propeptide that is removed on maturation; that stretch reads APAASPFANPGASPEAAPLADPLADP. Leucine amide is present on Leu-62.

Belongs to the MCD family. Mastoparan subfamily. As to expression, expressed by the venom gland.

It localises to the secreted. Functionally, antimicrobial peptide. Shows activity against both Gram-positive and -negative bacteria, as well against fungi. Also promotes important mast cell degranulation. Shows little hemolytic activity on rabbit and human erythrocytes. Its mast cell degranulation activity may be related to the activation of G-protein coupled receptors in mast cells as well as interaction with other proteins located in cell endosomal membranes in the mast cells. In Vespa bicolor (Black shield wasp), this protein is VESP-VB2.